Reading from the N-terminus, the 341-residue chain is S-adenosylmethionine:tRNA ribosyltransferase-isomerase (341 aa).

The protein belongs to the QueA family. As to quaternary structure, monomer.

The protein localises to the cytoplasm. It catalyses the reaction 7-aminomethyl-7-carbaguanosine(34) in tRNA + S-adenosyl-L-methionine = epoxyqueuosine(34) in tRNA + adenine + L-methionine + 2 H(+). It participates in tRNA modification; tRNA-queuosine biosynthesis. Its function is as follows. Transfers and isomerizes the ribose moiety from AdoMet to the 7-aminomethyl group of 7-deazaguanine (preQ1-tRNA) to give epoxyqueuosine (oQ-tRNA). This chain is S-adenosylmethionine:tRNA ribosyltransferase-isomerase, found in Desulforamulus reducens (strain ATCC BAA-1160 / DSM 100696 / MI-1) (Desulfotomaculum reducens).